The sequence spans 217 residues: Segregation and condensation protein B (217 aa).

This sequence belongs to the ScpB family. In terms of assembly, homodimer. Homodimerization may be required to stabilize the binding of ScpA to the Smc head domains. Component of a cohesin-like complex composed of ScpA, ScpB and the Smc homodimer, in which ScpA and ScpB bind to the head domain of Smc. The presence of the three proteins is required for the association of the complex with DNA.

The protein resides in the cytoplasm. Functionally, participates in chromosomal partition during cell division. May act via the formation of a condensin-like complex containing Smc and ScpA that pull DNA away from mid-cell into both cell halves. The protein is Segregation and condensation protein B of Geobacillus kaustophilus (strain HTA426).